The chain runs to 502 residues: Probable malate:quinone oxidoreductase (502 aa).

Belongs to the MQO family. FAD is required as a cofactor.

The enzyme catalyses (S)-malate + a quinone = a quinol + oxaloacetate. Its pathway is carbohydrate metabolism; tricarboxylic acid cycle; oxaloacetate from (S)-malate (quinone route): step 1/1. In Oceanobacillus iheyensis (strain DSM 14371 / CIP 107618 / JCM 11309 / KCTC 3954 / HTE831), this protein is Probable malate:quinone oxidoreductase.